Here is a 153-residue protein sequence, read N- to C-terminus: Pheromone-binding protein Gp-9 (153 aa).

The N-terminal stretch at 1–19 (MKTFVLHIFIFALVAFASA) is a signal peptide. 3 disulfide bridges follow: C37-C77, C73-C129, and C118-C138.

It belongs to the PBP/GOBP family. In terms of assembly, homodimer.

It localises to the secreted. In terms of biological role, colony queen number, a major feature of social organization, is associated with worker genotype for Gp-9. Colonies are headed by either a single reproductive queen (monogyne form) or multiple queens (polygyne form). Differences in worker Gp-9 genotypes between social forms may cause differences in workers' abilities to recognize queens and regulate their numbers. In Solenopsis substituta (Fire ant), this protein is Pheromone-binding protein Gp-9.